The chain runs to 185 residues: Ribosome-recycling factor (185 aa).

Belongs to the RRF family.

Its subcellular location is the cytoplasm. Its function is as follows. Responsible for the release of ribosomes from messenger RNA at the termination of protein biosynthesis. May increase the efficiency of translation by recycling ribosomes from one round of translation to another. In Buchnera aphidicola subsp. Schizaphis graminum (strain Sg), this protein is Ribosome-recycling factor.